A 449-amino-acid chain; its full sequence is Adenylyltransferase and sulfurtransferase MOCS3 (449 aa).

ATP-binding positions include glycine 96, aspartate 117, 124–128 (SNLHR), lysine 141, and 185–186 (DN). 2 residues coordinate Zn(2+): cysteine 227 and cysteine 230. The active-site Glycyl thioester intermediate; for adenylyltransferase activity is cysteine 244. Cysteine 302 and cysteine 305 together coordinate Zn(2+). In terms of domain architecture, Rhodanese spans 351 to 447 (QDKPHLLLDV…WTNQIDENFP (97 aa)). Residue cysteine 406 is the Cysteine persulfide intermediate; for sulfurtransferase activity of the active site.

This sequence in the N-terminal section; belongs to the HesA/MoeB/ThiF family. UBA4 subfamily. Zn(2+) serves as cofactor.

The protein resides in the cytoplasm. It localises to the cytosol. It carries out the reaction [molybdopterin-synthase sulfur-carrier protein]-C-terminal Gly-Gly + ATP + H(+) = [molybdopterin-synthase sulfur-carrier protein]-C-terminal Gly-Gly-AMP + diphosphate. The catalysed reaction is [molybdopterin-synthase sulfur-carrier protein]-C-terminal Gly-Gly-AMP + S-sulfanyl-L-cysteinyl-[cysteine desulfurase] + AH2 = [molybdopterin-synthase sulfur-carrier protein]-C-terminal-Gly-aminoethanethioate + L-cysteinyl-[cysteine desulfurase] + A + AMP + 2 H(+). It participates in tRNA modification; 5-methoxycarbonylmethyl-2-thiouridine-tRNA biosynthesis. It functions in the pathway cofactor biosynthesis; molybdopterin biosynthesis. Plays a central role in 2-thiolation of mcm(5)S(2)U at tRNA wobble positions of cytosolic tRNA(Lys), tRNA(Glu) and tRNA(Gln). Also essential during biosynthesis of the molybdenum cofactor. Acts by mediating the C-terminal thiocarboxylation of sulfur carriers URM1 and MOCS2A. Its N-terminus first activates URM1 and MOCS2A as acyl-adenylates (-COAMP), then the persulfide sulfur on the catalytic cysteine is transferred to URM1 and MOCS2A to form thiocarboxylation (-COSH) of their C-terminus. The reaction probably involves hydrogen sulfide that is generated from the persulfide intermediate and that acts as a nucleophile towards URM1 and MOCS2A. Subsequently, a transient disulfide bond is formed. Does not use thiosulfate as sulfur donor; NFS1 probably acting as a sulfur donor for thiocarboxylation reactions. This Drosophila grimshawi (Hawaiian fruit fly) protein is Adenylyltransferase and sulfurtransferase MOCS3.